The chain runs to 383 residues: Trichodiene synthase (383 aa).

This sequence belongs to the trichodiene synthase family.

It catalyses the reaction (2E,6E)-farnesyl diphosphate = trichodiene + diphosphate. The protein operates within sesquiterpene biosynthesis; trichothecene biosynthesis. Functionally, TS is a member of the terpene cyclase group of enzymes. It catalyzes the isomerization and cyclization of farnesyl pyro-phosphate to form trichodiene, the first cyclic intermediate in the biosynthetic pathway for trichothecenes. It serves to branch trichothecene biosynthesis from the isoprenoid pathway. The protein is Trichodiene synthase (TRI5) of Gibberella pulicaris.